Consider the following 854-residue polypeptide: Protein mono-ADP-ribosyltransferase PARP8 (854 aa).

Disordered regions lie at residues 113–138 (NGEE…EFYY) and 291–310 (SYPP…EQDG). The span at 123–135 (VEEDSEGDNDSEE) shows a compositional bias: acidic residues. Residues cysteine 332, cysteine 367, cysteine 376, and cysteine 395 each carry the ADP-ribosylcysteine modification. The PARP catalytic domain maps to 617–844 (EMTQAPYLEI…QEGGIHKEIL (228 aa)). The tract at residues 750–777 (QKVSAKDEPASSSKSSNTSQSQKKGQQS) is disordered. Residues 760-777 (SSSKSSNTSQSQKKGQQS) are compositionally biased toward low complexity.

The protein belongs to the ARTD/PARP family. Post-translationally, auto-mono-ADP-ribosylated.

It carries out the reaction L-cysteinyl-[protein] + NAD(+) = S-(ADP-D-ribosyl)-L-cysteinyl-[protein] + nicotinamide + H(+). Mono-ADP-ribosyltransferase that mediates mono-ADP-ribosylation of target proteins. The sequence is that of Protein mono-ADP-ribosyltransferase PARP8 from Homo sapiens (Human).